Consider the following 492-residue polypeptide: N-succinylglutamate 5-semialdehyde dehydrogenase (492 aa).

Position 220-225 (220-225 (GSANTG)) interacts with NAD(+). Active-site residues include Glu243 and Cys277.

Belongs to the aldehyde dehydrogenase family. AstD subfamily.

The enzyme catalyses N-succinyl-L-glutamate 5-semialdehyde + NAD(+) + H2O = N-succinyl-L-glutamate + NADH + 2 H(+). The protein operates within amino-acid degradation; L-arginine degradation via AST pathway; L-glutamate and succinate from L-arginine: step 4/5. Its function is as follows. Catalyzes the NAD-dependent reduction of succinylglutamate semialdehyde into succinylglutamate. The chain is N-succinylglutamate 5-semialdehyde dehydrogenase from Escherichia coli (strain 55989 / EAEC).